Here is a 406-residue protein sequence, read N- to C-terminus: Homocitrate synthase AksA (406 aa).

A Pyruvate carboxyltransferase domain is found at 32–285 (IYIYDTTLRD…DLGLNLEVLP (254 aa)).

The protein belongs to the alpha-IPM synthase/homocitrate synthase family.

The enzyme catalyses acetyl-CoA + 2-oxoglutarate + H2O = (2R)-homocitrate + CoA + H(+). It catalyses the reaction 2-oxoadipate + acetyl-CoA + H2O = (R)-dihomocitrate + CoA + H(+). The catalysed reaction is 2-oxoheptanedioate + acetyl-CoA + H2O = (R)-trihomocitrate + CoA + H(+). The protein operates within organic acid metabolism; 2-oxosuberate biosynthesis. In terms of biological role, catalyzes the condensation of alpha-ketoglutarate and acetyl-CoA to form (R)-homocitrate. Can also catalyze the condensation of alpha-ketoadipate with acetyl-CoA to form (R)-homo(2)citrate, and the condensation of alpha-ketopimelate with acetyl-CoA to form (R)-homo(3)citrate. These reactions are part of the biosynthesis pathway of coenzyme B and biotin. This chain is Homocitrate synthase AksA (aksA), found in Methanocaldococcus jannaschii (strain ATCC 43067 / DSM 2661 / JAL-1 / JCM 10045 / NBRC 100440) (Methanococcus jannaschii).